A 419-amino-acid chain; its full sequence is E3 ubiquitin-protein ligase RNFT1 (419 aa).

A disordered region spans residues 1 to 120 (MKLRAQFDRG…SGESDLESGE (120 aa)). 2 stretches are compositionally biased toward polar residues: residues 31-44 (EPSS…SLTL) and 72-82 (GSSSGSTNGRG). Over residues 84–102 (TSRRMRTASHSHSHTHGHG) the composition is skewed to basic residues. A run of 6 helical transmembrane segments spans residues 141-161 (FIVI…AVAV), 187-207 (LHCA…FYTF), 217-237 (FFAN…SVGV), 240-260 (FILK…PCPL), 270-290 (YMLI…PLWF), and 303-323 (VGLT…LLAL). The interval 352–403 (IREAGDICPICQADFKQPRVLVCQHIFCEECIAQWLNQERTCPLCRTVITDK) is required for ubiquitin ligase activity and for protection against ER stress-induced cell death. The RING-type zinc-finger motif lies at 359–397 (CPICQADFKQPRVLVCQHIFCEECIAQWLNQERTCPLCR).

It is found in the endoplasmic reticulum membrane. The catalysed reaction is S-ubiquitinyl-[E2 ubiquitin-conjugating enzyme]-L-cysteine + [acceptor protein]-L-lysine = [E2 ubiquitin-conjugating enzyme]-L-cysteine + N(6)-ubiquitinyl-[acceptor protein]-L-lysine.. It functions in the pathway protein modification; protein ubiquitination. Functionally, E3 ubiquitin-protein ligase that acts in the endoplasmic reticulum (ER)-associated degradation (ERAD) pathway, which targets misfolded proteins that accumulate in the endoplasmic reticulum (ER) for ubiquitination and subsequent proteasome-mediated degradation. Protects cells from ER stress-induced apoptosis. The polypeptide is E3 ubiquitin-protein ligase RNFT1 (rnft1) (Danio rerio (Zebrafish)).